We begin with the raw amino-acid sequence, 272 residues long: Probable glutathione S-transferase DHAR2, chloroplastic (272 aa).

The transit peptide at 1–57 (MAVLLRTTTSATTATSGGSSSATALLATTFRRGGRRLLLLPATRGSAPRRAALLTAR) directs the protein to the chloroplast. Lysine 68 and aspartate 79 together coordinate glutathione. Residues lysine 68 and aspartate 79 each coordinate L-ascorbate. One can recognise a GST N-terminal domain in the interval 70–148 (SLTVPDRLGD…AIEEKYPEPS (79 aa)). The active-site Nucleophile is the cysteine 80. Residues lysine 107, valine 120, serine 133, histidine 219, and tryptophan 266 each coordinate glutathione. One can recognise a GST C-terminal domain in the interval 126–272 (EEQWVADSDV…IAGWRPKVMG (147 aa)). Lysine 269 contributes to the L-ascorbate binding site.

This sequence belongs to the GST superfamily. DHAR family. In terms of assembly, monomer.

The protein localises to the plastid. It is found in the chloroplast. The enzyme catalyses RX + glutathione = an S-substituted glutathione + a halide anion + H(+). The catalysed reaction is L-dehydroascorbate + 2 glutathione = glutathione disulfide + L-ascorbate. Functionally, involved in ascorbate homeostasis. Maintains redox pools of ascorbate by recycling dihydroascorbate (DHA) to ascorbate. Involved in scavenging reactive oxygen species (ROS) under oxidative stresses. In Oryza sativa subsp. japonica (Rice), this protein is Probable glutathione S-transferase DHAR2, chloroplastic.